The sequence spans 383 residues: Chitinase-3-like protein 1 (383 aa).

The N-terminal stretch at M1–A21 is a signal peptide. The GH18 domain occupies Y22–V383. C26 and C51 are joined by a disulfide. N60 carries an N-linked (GlcNAc...) asparagine glycan. Chitin-binding positions include E70–W71, G97–N100, Y141, L204–D207, and R263. A disulfide bridge connects residues C300 and C364. The important for AKT1 activation and IL8 production stretch occupies residues Q324–A338. Residue W352 coordinates chitin. N367 carries N-linked (GlcNAc...) asparagine glycosylation.

This sequence belongs to the glycosyl hydrolase 18 family. As to quaternary structure, monomer. Post-translationally, glycosylated. In terms of tissue distribution, mammary secretions collected during the non-lactating period.

It localises to the secreted. It is found in the extracellular space. The protein resides in the cytoplasm. The protein localises to the perinuclear region. Its subcellular location is the endoplasmic reticulum. In terms of biological role, carbohydrate-binding lectin with a preference for chitin. Has no chitinase activity. May play a role in tissue remodeling and in the capacity of cells to respond to and cope with changes in their environment. Plays a role in T-helper cell type 2 (Th2) inflammatory response and IL-13-induced inflammation, regulating allergen sensitization, inflammatory cell apoptosis, dendritic cell accumulation and M2 macrophage differentiation. Facilitates invasion of pathogenic enteric bacteria into colonic mucosa and lymphoid organs. Mediates activation of AKT1 signaling pathway and subsequent IL8 production in colonic epithelial cells. Regulates antibacterial responses in lung by contributing to macrophage bacterial killing, controlling bacterial dissemination and augmenting host tolerance. Also regulates hyperoxia-induced injury, inflammation and epithelial apoptosis in lung. The sequence is that of Chitinase-3-like protein 1 (CHI3L1) from Bos taurus (Bovine).